We begin with the raw amino-acid sequence, 319 residues long: Acetyl-coenzyme A carboxylase carboxyl transferase subunit alpha (319 aa).

The CoA carboxyltransferase C-terminal domain maps to glutamate 31–glutamate 292.

This sequence belongs to the AccA family. In terms of assembly, acetyl-CoA carboxylase is a heterohexamer composed of biotin carboxyl carrier protein (AccB), biotin carboxylase (AccC) and two subunits each of ACCase subunit alpha (AccA) and ACCase subunit beta (AccD).

The protein resides in the cytoplasm. The enzyme catalyses N(6)-carboxybiotinyl-L-lysyl-[protein] + acetyl-CoA = N(6)-biotinyl-L-lysyl-[protein] + malonyl-CoA. Its pathway is lipid metabolism; malonyl-CoA biosynthesis; malonyl-CoA from acetyl-CoA: step 1/1. In terms of biological role, component of the acetyl coenzyme A carboxylase (ACC) complex. First, biotin carboxylase catalyzes the carboxylation of biotin on its carrier protein (BCCP) and then the CO(2) group is transferred by the carboxyltransferase to acetyl-CoA to form malonyl-CoA. The polypeptide is Acetyl-coenzyme A carboxylase carboxyl transferase subunit alpha (Rhodopirellula baltica (strain DSM 10527 / NCIMB 13988 / SH1)).